Consider the following 163-residue polypeptide: Nucleotide-binding protein YajQ (163 aa).

It belongs to the YajQ family.

Its function is as follows. Nucleotide-binding protein. This chain is Nucleotide-binding protein YajQ, found in Shigella flexneri.